The sequence spans 338 residues: Glycerol-3-phosphate dehydrogenase [NAD(P)+] (338 aa).

NADPH contacts are provided by Ser13, Trp14, and Lys108. The sn-glycerol 3-phosphate site is built by Lys108, Gly139, and Ser141. An NADPH-binding site is contributed by Ala143. 5 residues coordinate sn-glycerol 3-phosphate: Lys194, Asp247, Ser257, Arg258, and Asn259. The active-site Proton acceptor is Lys194. Residue Arg258 participates in NADPH binding. NADPH contacts are provided by Val282 and Glu284.

Belongs to the NAD-dependent glycerol-3-phosphate dehydrogenase family.

Its subcellular location is the cytoplasm. It catalyses the reaction sn-glycerol 3-phosphate + NAD(+) = dihydroxyacetone phosphate + NADH + H(+). The catalysed reaction is sn-glycerol 3-phosphate + NADP(+) = dihydroxyacetone phosphate + NADPH + H(+). Its pathway is membrane lipid metabolism; glycerophospholipid metabolism. In terms of biological role, catalyzes the reduction of the glycolytic intermediate dihydroxyacetone phosphate (DHAP) to sn-glycerol 3-phosphate (G3P), the key precursor for phospholipid synthesis. The polypeptide is Glycerol-3-phosphate dehydrogenase [NAD(P)+] (Streptococcus pneumoniae (strain JJA)).